Here is a 316-residue protein sequence, read N- to C-terminus: HPr kinase/phosphorylase (316 aa).

Residues His143 and Lys164 contribute to the active site. 158–165 (GEAGSGKS) contacts ATP. Ser165 lines the Mg(2+) pocket. Catalysis depends on Asp182, which acts as the Proton acceptor; for phosphorylation activity. Proton donor; for dephosphorylation activity. Residues 206 to 215 (LEVRGLGVLN) are important for the catalytic mechanism of both phosphorylation and dephosphorylation. Glu207 lines the Mg(2+) pocket. The active site involves Arg251. The tract at residues 272 to 277 (PVMPGR) is important for the catalytic mechanism of dephosphorylation.

It belongs to the HPrK/P family. Homohexamer. The cofactor is Mg(2+).

It catalyses the reaction [HPr protein]-L-serine + ATP = [HPr protein]-O-phospho-L-serine + ADP + H(+). The enzyme catalyses [HPr protein]-O-phospho-L-serine + phosphate + H(+) = [HPr protein]-L-serine + diphosphate. In terms of biological role, catalyzes the ATP- as well as the pyrophosphate-dependent phosphorylation of a specific serine residue in HPr, a phosphocarrier protein of the phosphoenolpyruvate-dependent sugar phosphotransferase system (PTS). HprK/P also catalyzes the pyrophosphate-producing, inorganic phosphate-dependent dephosphorylation (phosphorolysis) of seryl-phosphorylated HPr (P-Ser-HPr). The protein is HPr kinase/phosphorylase of Xanthomonas axonopodis pv. citri (strain 306).